We begin with the raw amino-acid sequence, 155 residues long: Ribosome maturation factor RimP (155 aa).

It belongs to the RimP family.

The protein resides in the cytoplasm. Required for maturation of 30S ribosomal subunits. The sequence is that of Ribosome maturation factor RimP from Prochlorococcus marinus subsp. pastoris (strain CCMP1986 / NIES-2087 / MED4).